The primary structure comprises 445 residues: GTPase Der (445 aa).

2 consecutive EngA-type G domains span residues Pro3–Val166 and Ile180–Tyr353. GTP-binding positions include Gly9–Ser16, Asp56–Ile60, Asn118–Asp121, Gly186–Ser193, Asp233–Ile237, and Asn298–Asp301. One can recognise a KH-like domain in the interval Ala354–Glu438.

This sequence belongs to the TRAFAC class TrmE-Era-EngA-EngB-Septin-like GTPase superfamily. EngA (Der) GTPase family. As to quaternary structure, associates with the 50S ribosomal subunit.

Its function is as follows. GTPase that plays an essential role in the late steps of ribosome biogenesis. The polypeptide is GTPase Der (Marinomonas sp. (strain MWYL1)).